A 797-amino-acid chain; its full sequence is Striatin-3 (797 aa).

At M1 the chain carries N-acetylmethionine. 2 stretches are compositionally biased toward gly residues: residues M1 to P12 and G33 to P43. Residues M1–P60 are disordered. Residues P44–P55 show a composition bias toward low complexity. Residues Y71–F79 are caveolin-binding. A coiled-coil region spans residues A77–K136. Position 150 is a phosphothreonine (T150). The calmodulin-binding stretch occupies residues Q166 to L183. Residues S202, S214, S229, S257, and S335 each carry the phosphoserine modification. A disordered region spans residues D313–P336. 6 WD repeats span residues S478–K517, A531–Y570, A584–C623, Q679–S718, A721–E760, and K767–F796.

This sequence belongs to the WD repeat striatin family. In terms of assembly, tetramerizes. Part of the core of STRIPAK complexes composed of PP2A catalytic and scaffolding subunits, the striatins (PP2A regulatory subunits), the striatin-associated proteins MOB4, STRIP1 and STRIP2, PDCD10 and members of the STE20 kinases, such as STK24 and STK26. The STRIPAK complex can be extended by adapter proteins such as SLMAP:SIKE1 or CTTNBP2NL. Interacts with CDC42BPB.

It localises to the cytoplasm. The protein localises to the membrane. Functionally, calmodulin-binding scaffolding protein which is the center of the striatin-interacting phosphatase and kinase (STRIPAK) complexes. STRIPAK complexes have critical roles in protein (de)phosphorylation and are regulators of multiple signaling pathways including Hippo, MAPK, nuclear receptor and cytoskeleton remodeling. Different types of STRIPAK complexes are involved in a variety of biological processes such as cell growth, differentiation, apoptosis, metabolism and immune regulation. This is Striatin-3 (STRN3) from Bos taurus (Bovine).